Consider the following 544-residue polypeptide: Dihydrolipoyllysine-residue acetyltransferase component of pyruvate dehydrogenase complex (544 aa).

2 Lipoyl-binding domains span residues 1–76 (MYEF…VTID) and 113–188 (IYDF…VLIG). Residues K42 and K154 each carry the N6-lipoyllysine modification. Residues 242–279 (LASPVARKLASDLGVDIATIKGSGEQGRVMKDDVQNSK) enclose the Peripheral subunit-binding (PSBD) domain. The active site involves H516.

It belongs to the 2-oxoacid dehydrogenase family. As to quaternary structure, forms a 24-polypeptide structural core with octahedral symmetry. It depends on (R)-lipoate as a cofactor.

It carries out the reaction N(6)-[(R)-dihydrolipoyl]-L-lysyl-[protein] + acetyl-CoA = N(6)-[(R)-S(8)-acetyldihydrolipoyl]-L-lysyl-[protein] + CoA. Its function is as follows. The pyruvate dehydrogenase complex catalyzes the overall conversion of pyruvate to acetyl-CoA and CO(2). It contains multiple copies of three enzymatic components: pyruvate dehydrogenase (E1), dihydrolipoamide acetyltransferase (E2) and lipoamide dehydrogenase (E3). This is Dihydrolipoyllysine-residue acetyltransferase component of pyruvate dehydrogenase complex (pdhC) from Acholeplasma laidlawii.